The primary structure comprises 747 residues: Anoctamin-9 (747 aa).

Topologically, residues 1 to 193 are cytoplasmic; it reads MQDDESSQIF…LYFTWLGWYT (193 aa). A helical transmembrane segment spans residues 194–214; it reads YMLVPAAVVGLIVFLSGFALF. Residues 215–259 lie on the Extracellular side of the membrane; sequence DSSQISKEICSANDIFMCPLGDHSHRYLRLSEMCTFAKLTHLFDN. S245 carries the phosphoserine; by PKA modification. The chain crosses the membrane as a helical span at residues 260 to 280; sequence EGTVLFAIFMALWATVFLEIW. At 281-326 the chain is on the cytoplasmic side; that stretch reads KRKRAHEVQSWKLYEWDEEEEEMALELINSPHYKLKDHRHSYLSST. A helical transmembrane segment spans residues 327–347; it reads IILILSLFMICLMIGMAHVLV. Residues 348-364 lie on the Extracellular side of the membrane; sequence VYRVLAGALFSSLVKQQ. The helical transmembrane segment at 365–385 threads the bilayer; that stretch reads VTTAVVVTGAVVHYIIIVIMT. The Cytoplasmic portion of the chain corresponds to 386–414; sequence KVNKYVALKLCKFEESGTFSEQERKFTVK. Residues 415-435 traverse the membrane as a helical segment; it reads FFILQFFAHFSSLIYIAFILG. Residues 436–543 lie on the Extracellular side of the membrane; sequence RINGHPGKST…EMMIQYGFTT (108 aa). The helical transmembrane segment at 544 to 564 threads the bilayer; that stretch reads IFVAAFPLAPLLALFSNLVEI. Residues 565-595 lie on the Cytoplasmic side of the membrane; it reads RLDAIKMVRLQRRLVPRKAKDIGTWLQVLET. A helical membrane pass occupies residues 596-616; that stretch reads IGVLAVIANGMVIAFTSEFIP. Topologically, residues 617–695 are extracellular; sequence RVVYKYHYGP…FWFILAIRLT (79 aa). N-linked (GlcNAc...) asparagine glycans are attached at residues N630, N643, N665, and N681. The chain crosses the membrane as a helical span at residues 696 to 716; the sequence is FVILFEHFALCIKLIAAWFVP. Over 717-747 the chain is Cytoplasmic; the sequence is DVPQKVKNEVLQEKYDRIRHRMRFSSRSTDV.

The protein belongs to the anoctamin family. Phosphorylation on Ser-245 by cAMP-dependent protein kinase A (PKA)is essential for activation of its cation channel activity. Highly expressed in the olfactory epithelium, particularly in mature olfactory sensory neurons (at protein level). Expressed in the kidney (at protein level). Predominant expression seen in epithelial tissues. Highly expressed in the small intestine, colon and stomach.

The protein resides in the cell membrane. The protein localises to the endoplasmic reticulum. It catalyses the reaction a 1,2-diacyl-sn-glycero-3-phospho-L-serine(in) = a 1,2-diacyl-sn-glycero-3-phospho-L-serine(out). The enzyme catalyses a beta-D-galactosyl-(1&lt;-&gt;1')-N-acylsphing-4-enine(out) = a beta-D-galactosyl-(1&lt;-&gt;1')-N-acylsphing-4-enine(in). The catalysed reaction is a 1,2-diacyl-sn-glycero-3-phosphocholine(in) = a 1,2-diacyl-sn-glycero-3-phosphocholine(out). It carries out the reaction Ca(2+)(in) = Ca(2+)(out). It catalyses the reaction Na(+)(in) = Na(+)(out). The enzyme catalyses K(+)(in) = K(+)(out). With respect to regulation, cation channel activity is activated via phosphorylation on Ser-245 by cAMP-dependent protein kinase A (PKA). Inhibited by NaCl. Its function is as follows. PKA-activated nonselective cation channel. Discriminates poorly among cations but is more permeable to Ca(2+) ions than to monovalent cations. Acts as a calcium-activated calcium permeable channel which may operate as a endoplasmic reticulum (ER) Ca(2+)-leak channel, reducing the loading of the ER Ca(2+) store. Regulates intracellular Ca2+ signals, ion channel activity, and cytokine release in the renal tissue. Plays an important role in olfaction, amplifying cAMP-evoked cyclic nucleotide-gated (CNG) channel currents in the olfactory sensory neurons. Has calcium-dependent phospholipid scramblase activity; scrambles phosphatidylserine, phosphatidylcholine and galactosylceramide. Does not exhibit calcium-activated chloride channel (CaCC) activity. Can inhibit the activity of ANO1. The protein is Anoctamin-9 of Mus musculus (Mouse).